Reading from the N-terminus, the 349-residue chain is Protein-glutamate methylesterase/protein-glutamine glutaminase (349 aa).

The region spanning 5–122 (RVLCVDDSAL…REGMLAYSEL (118 aa)) is the Response regulatory domain. Asp-56 carries the post-translational modification 4-aspartylphosphate. Residues 152–344 (LLSSEKLIAI…QRMLAQISSG (193 aa)) enclose the CheB-type methylesterase domain. Residues Ser-164, His-190, and Asp-286 contribute to the active site.

It belongs to the CheB family. Post-translationally, phosphorylated by CheA. Phosphorylation of the N-terminal regulatory domain activates the methylesterase activity.

The protein resides in the cytoplasm. The enzyme catalyses [protein]-L-glutamate 5-O-methyl ester + H2O = L-glutamyl-[protein] + methanol + H(+). It carries out the reaction L-glutaminyl-[protein] + H2O = L-glutamyl-[protein] + NH4(+). Functionally, involved in chemotaxis. Part of a chemotaxis signal transduction system that modulates chemotaxis in response to various stimuli. Catalyzes the demethylation of specific methylglutamate residues introduced into the chemoreceptors (methyl-accepting chemotaxis proteins or MCP) by CheR. Also mediates the irreversible deamidation of specific glutamine residues to glutamic acid. The protein is Protein-glutamate methylesterase/protein-glutamine glutaminase of Yersinia pseudotuberculosis serotype I (strain IP32953).